Consider the following 77-residue polypeptide: uncharacterized protein (77 aa).

The interval 53–77 (KRVSSEANKEKSDITELLRKQVRPD) is disordered.

This is an uncharacterized protein from Escherichia coli (strain K12).